A 196-amino-acid chain; its full sequence is ECF RNA polymerase sigma factor SigM (196 aa).

Positions 39–105 are sigma-70 factor domain-2; sequence LFRRHHRQLH…ACLDRLRRAK (67 aa). Positions 63–66 match the Interaction with polymerase core subunit RpoC motif; that stretch reads DALQ. The interval 130 to 181 is sigma-70 factor domain-4; that stretch reads AVQRALMRLPVEQRAAVVAVDMQGYSIADTARMLGVAEGTVKSRCARARARL. Residues 156–175 constitute a DNA-binding region (H-T-H motif); sequence IADTARMLGVAEGTVKSRCA.

The protein belongs to the sigma-70 factor family. ECF subfamily. Interacts transiently with the RNA polymerase catalytic core formed by RpoA, RpoB, RpoC and RpoZ (2 alpha, 1 beta, 1 beta' and 1 omega subunit) to form the RNA polymerase holoenzyme that can initiate transcription. Interacts (via sigma-70 factor domain 4) with anti-sigma-M factor RsmA.

Its function is as follows. Sigma factors are initiation factors that promote the attachment of RNA polymerase to specific initiation sites and are then released. Extracytoplasmic function (ECF) sigma factors are held in an inactive form by an anti-sigma factor until released by regulated intramembrane proteolysis. This chain is ECF RNA polymerase sigma factor SigM (sigM), found in Mycobacterium tuberculosis (strain ATCC 35801 / TMC 107 / Erdman).